We begin with the raw amino-acid sequence, 746 residues long: MIEDSGKRGNTMAERRQLFAEMRAQDLDRIRLSTYRTACKLRFVQKKCNLHLVDIWNVIEALRENALNNLDPNIELNVARLEAVLSTIFYQLNKRMPTTHQIHVEQSISLLLNFLLAAFDPEGHGKISVFAVKMALATLCGGKIMDKLRYIFSMISDSSGVMVYGRYDQFLREVLKLPTAVFEGPSFGYTEQSARSCFSQQKKVTLNGFLDTLMSDPPPQCLVWLPLLHRLANVENVFHPVECSYCHSESMMGFRYRCQQCHNYQLCQDCFWRGHAGGSHSNQHQMKEYTSWKSPAKKLTNALSKSLSCASSREPLHPMFPDQPEKPLNLAHIVPPRPVTSMNDTLFSHSVPSSGSPFITRSSPPKDSEVEQNKMLARAAPAFLKGRGIQYSLNVADRLADEHVLIGLYVNMLRNDPPCMLESSNRLDEEHRLIARYAARLAAESSSSQPTQQRSAPDISFTIDANKQQRQLIAELENKNREILQEIQRLRVEHEQASQPTPEKAQQNPTLLAELRLLRQRKDELEQRMSALQESRRELMVQLEGLMKLLKEEELKQGTQGASSPRSSPSHTISRPIPMPIRSASACPTPTHTPQDSLTGVGGDVQEAFAQSSRRNLRSDLLVAADSITNTMSSLVKELNSEVASETESTVDSEFSRPQFEDLAPSPTSEKAFLAQIHSRKPGYIHGGAASTTHGDMVPEDGDPYTQPEDGNYENESVRQLENELQLEEYLKQKLQDEAYQVSLQG.

Residues 1 to 288 (MIEDSGKRGN…SHSNQHQMKE (288 aa)) form an interaction with MAGEE1 region. Residues 238–294 (FHPVECSYCHSESMMGFRYRCQQCHNYQLCQDCFWRGHAGGSHSNQHQMKEYTSWKS) form a ZZ-type zinc finger. Positions 243, 246, 258, 261, 267, 270, 280, and 284 each coordinate Zn(2+). Residues 397–447 (DRLADEHVLIGLYVNMLRNDPPCMLESSNRLDEEHRLIARYAARLAAESSS) are syntrophin-binding region. Positions 458 to 557 (DISFTIDANK…KLLKEEELKQ (100 aa)) form a coiled coil. 3 disordered regions span residues 555–577 (LKQG…SRPI), 646–667 (ETES…APSP), and 684–721 (YIHG…VRQL). Residues 563–576 (SSPRSSPSHTISRP) are compositionally biased toward low complexity. A Phosphoserine modification is found at serine 666.

The protein belongs to the dystrophin family. Dystrobrevin subfamily. As to quaternary structure, interacts with dystrophin, utrophin and the syntrophins SNTA1, SNTB1, SNTB2, SNTG1 and SNTG2. Binds dystrobrevin binding protein 1. Interacts with MAGEE1. Interacts with Ctnnal1. The interaction is required for correct localization of both Ctnnal1 and Dtna. In terms of assembly, does not interact with utrophin. Does not interact with syntrophin. In terms of processing, phosphorylation of isoform 2 on tyrosine kinase substrate domain present in the C-terminus. As to expression, expressed in skeletal muscle, heart, lung and brain. Sarcolemma and neuromuscular junction in skeletal muscle. Isoform 2 is restricted to the neuromuscular junction. Isoforms 5 and 6 are only expressed in muscle.

The protein localises to the cytoplasm. It localises to the synapse. The protein resides in the cell membrane. Involved in synapse maturation and required for normal muscle function. The chain is Dystrobrevin alpha (Dtna) from Mus musculus (Mouse).